The following is a 153-amino-acid chain: Transcriptional repressor NrdR 3 (153 aa).

The tract at residues 1–26 (MRCPFCGHDDTQVKDSRPTEDNSAIR) is disordered. A zinc finger spans residues 3-34 (CPFCGHDDTQVKDSRPTEDNSAIRRRRSCPEC). The span at 7–24 (GHDDTQVKDSRPTEDNSA) shows a compositional bias: basic and acidic residues. Residues 49–139 (LVVIKKDGGR…VYRNFREAKD (91 aa)) form the ATP-cone domain.

This sequence belongs to the NrdR family. Requires Zn(2+) as cofactor.

Functionally, negatively regulates transcription of bacterial ribonucleotide reductase nrd genes and operons by binding to NrdR-boxes. This is Transcriptional repressor NrdR 3 from Paramagnetospirillum magneticum (strain ATCC 700264 / AMB-1) (Magnetospirillum magneticum).